Reading from the N-terminus, the 332-residue chain is Cytochrome c1, heme protein, mitochondrial (332 aa).

The N-terminal 70 residues, 1–70 (MLARTCLRST…YYHLYGFASA (70 aa)), are a transit peptide targeting the mitochondrion. At 71 to 277 (MTPAEEGLHA…AEPEMDDRKR (207 aa)) the chain is on the mitochondrial intermembrane side. Positions 97–250 (QALRRGFQVY…GLVDYEDGTP (154 aa)) constitute a Cytochrome c domain. Residues Cys110, Cys113, and His114 each coordinate heme c. Residues 139 to 151 (EENEYDTEPNDQG) are compositionally biased toward acidic residues. The disordered stretch occupies residues 139 to 162 (EENEYDTEPNDQGEIEKRPGKLSD). A heme c-binding site is contributed by Met234. Residues 278–296 (MGMKVLVVTSVLFALSVYV) form a helical membrane-spanning segment. Topologically, residues 297 to 332 (KRYKWAWLKSRKIVYDPPKSPPPATNLALPQQRAKS) are mitochondrial matrix.

The protein belongs to the cytochrome c family. In terms of assembly, component of the ubiquinol-cytochrome c oxidoreductase (cytochrome b-c1 complex, complex III, CIII), a multisubunit enzyme composed of 10 subunits. The complex is composed of 3 respiratory subunits cytochrome b (cob), cytochrome c1 (cyt-1) and Rieske protein (fes-1), 2 core protein subunits pep and ucr-1, and 5 low-molecular weight protein subunits qcr6, qcr7, qcr8, qcr9 and probably NCU16844/qcr10. The complex exists as an obligatory dimer and forms supercomplexes (SCs) in the inner mitochondrial membrane with NADH-ubiquinone oxidoreductase (complex I, CI) and cytochrome c oxidase (complex IV, CIV), resulting in different assemblies (supercomplexes SCI(1)III(2), SCIII(2)IV(1) and SCIII(2)IV(2) as well as higher order I(x)III(y)IV(z) megacomplexes). Heme c is required as a cofactor.

The protein resides in the mitochondrion inner membrane. It carries out the reaction a quinol + 2 Fe(III)-[cytochrome c](out) = a quinone + 2 Fe(II)-[cytochrome c](out) + 2 H(+)(out). Its function is as follows. Component of the ubiquinol-cytochrome c oxidoreductase, a multisubunit transmembrane complex that is part of the mitochondrial electron transport chain which drives oxidative phosphorylation. The respiratory chain contains 3 multisubunit complexes succinate dehydrogenase (complex II, CII), ubiquinol-cytochrome c oxidoreductase (cytochrome b-c1 complex, complex III, CIII) and cytochrome c oxidase (complex IV, CIV), that cooperate to transfer electrons derived from NADH and succinate to molecular oxygen, creating an electrochemical gradient over the inner membrane that drives transmembrane transport and the ATP synthase. The cytochrome b-c1 complex catalyzes electron transfer from ubiquinol to cytochrome c, linking this redox reaction to translocation of protons across the mitochondrial inner membrane, with protons being carried across the membrane as hydrogens on the quinol. In the process called Q cycle, 2 protons are consumed from the matrix, 4 protons are released into the intermembrane space and 2 electrons are passed to cytochrome c. Cytochrome c1 is a catalytic core subunit containing a c-type heme. It transfers electrons from the [2Fe-2S] iron-sulfur cluster of the Rieske protein to cytochrome c. The polypeptide is Cytochrome c1, heme protein, mitochondrial (cyt-1) (Neurospora crassa (strain ATCC 24698 / 74-OR23-1A / CBS 708.71 / DSM 1257 / FGSC 987)).